Consider the following 617-residue polypeptide: MKQSKMLIPTLREMPSDAQVISHALMVRAGYVRQVSAGIYAYLPLANRTIEKFKTIMRQEFEKIGAVEMLAPALLTADLWRESGRYETYGEDLYKLKNRDQSDFILGPTHEETFTTLVRDAVKSYKQLPLNLYQIQSKYRDEKRPRNGLLRTREFIMKDGYSFHKDYEDLDVTYEDYRKAYEAIFTRAGLDFKGIIGDGGAMGGKDSQEFMAVTPNRTDLNRWLVLDKTIPSIDDIPEDVLEEIKAELSAWLVSGEDTIAYSTESSYAANLEMATNEYKPSTKAATFEEVTKVETPNCKSIDEVAGFLSIDKNQTIKTLLFIADEQPVVALLVGNDQVNDVKLKNYLAADFLEPASEEQAKEIFGAGFGSLGPVNLPESVKIIADRKVQDLANAVSGANQDGYHFTGVNPERDFTAEYVDIREVKEGEISPDGKGTLKFSRGIEIGHIFKLGTRYSDSMGANILDENGRSNPIVMGCYGIGVSRILSAVIEQHARLFVNKTPKGAYRFAWGINFPEELAPFDVHLITVNVKDQESQDLTEKIEADLMLKGYEVLTDDRNERVGSKFSDSDLIGLPIRVTVGKKASEGIVEVKIKASGDTIEVHADNLIETLEILTKK.

The protein belongs to the class-II aminoacyl-tRNA synthetase family. ProS type 1 subfamily. Homodimer.

It is found in the cytoplasm. It carries out the reaction tRNA(Pro) + L-proline + ATP = L-prolyl-tRNA(Pro) + AMP + diphosphate. Catalyzes the attachment of proline to tRNA(Pro) in a two-step reaction: proline is first activated by ATP to form Pro-AMP and then transferred to the acceptor end of tRNA(Pro). As ProRS can inadvertently accommodate and process non-cognate amino acids such as alanine and cysteine, to avoid such errors it has two additional distinct editing activities against alanine. One activity is designated as 'pretransfer' editing and involves the tRNA(Pro)-independent hydrolysis of activated Ala-AMP. The other activity is designated 'posttransfer' editing and involves deacylation of mischarged Ala-tRNA(Pro). The misacylated Cys-tRNA(Pro) is not edited by ProRS. The sequence is that of Proline--tRNA ligase from Streptococcus agalactiae serotype Ia (strain ATCC 27591 / A909 / CDC SS700).